Reading from the N-terminus, the 265-residue chain is 3-methyl-2-oxobutanoate hydroxymethyltransferase (265 aa).

The Mg(2+) site is built by D44 and D83. Residues D44–S45, D83, and K113 contribute to the 3-methyl-2-oxobutanoate site. A Mg(2+)-binding site is contributed by E115. E183 functions as the Proton acceptor in the catalytic mechanism.

Belongs to the PanB family. In terms of assembly, homodecamer; pentamer of dimers. The cofactor is Mg(2+).

Its subcellular location is the cytoplasm. The enzyme catalyses 3-methyl-2-oxobutanoate + (6R)-5,10-methylene-5,6,7,8-tetrahydrofolate + H2O = 2-dehydropantoate + (6S)-5,6,7,8-tetrahydrofolate. It participates in cofactor biosynthesis; (R)-pantothenate biosynthesis; (R)-pantoate from 3-methyl-2-oxobutanoate: step 1/2. Catalyzes the reversible reaction in which hydroxymethyl group from 5,10-methylenetetrahydrofolate is transferred onto alpha-ketoisovalerate to form ketopantoate. The polypeptide is 3-methyl-2-oxobutanoate hydroxymethyltransferase (Leptospira interrogans serogroup Icterohaemorrhagiae serovar copenhageni (strain Fiocruz L1-130)).